The primary structure comprises 248 residues: tRNA (guanine-N(1)-)-methyltransferase (248 aa).

Residues glycine 113 and 133–138 (IGDYVL) contribute to the S-adenosyl-L-methionine site.

The protein belongs to the RNA methyltransferase TrmD family. Homodimer.

Its subcellular location is the cytoplasm. The enzyme catalyses guanosine(37) in tRNA + S-adenosyl-L-methionine = N(1)-methylguanosine(37) in tRNA + S-adenosyl-L-homocysteine + H(+). Functionally, specifically methylates guanosine-37 in various tRNAs. The polypeptide is tRNA (guanine-N(1)-)-methyltransferase (Shewanella denitrificans (strain OS217 / ATCC BAA-1090 / DSM 15013)).